The sequence spans 251 residues: UPF0246 protein TM1040_2658 (251 aa).

This sequence belongs to the UPF0246 family.

This Ruegeria sp. (strain TM1040) (Silicibacter sp.) protein is UPF0246 protein TM1040_2658.